We begin with the raw amino-acid sequence, 120 residues long: UPF0102 protein CBU_1742 (120 aa).

Belongs to the UPF0102 family.

The protein is UPF0102 protein CBU_1742 of Coxiella burnetii (strain RSA 493 / Nine Mile phase I).